A 557-amino-acid polypeptide reads, in one-letter code: Glutathione hydrolase proenzyme (557 aa).

The first 24 residues, 1-24 (MQPVLFRTLSLGVAIAAASSSAFA), serve as a signal peptide directing secretion. L-glutamate is bound at residue arginine 94. Threonine 364 serves as the catalytic Nucleophile. Residues threonine 382, asparagine 384, glutamate 403, aspartate 406, 435–436 (SS), and 456–457 (GG) each bind L-glutamate.

The protein belongs to the gamma-glutamyltransferase family. This enzyme consists of two polypeptide chains, which are synthesized in precursor form from a single polypeptide. Cleaved by autocatalysis into a large and a small subunit.

Its subcellular location is the periplasm. The catalysed reaction is an N-terminal (5-L-glutamyl)-[peptide] + an alpha-amino acid = 5-L-glutamyl amino acid + an N-terminal L-alpha-aminoacyl-[peptide]. It catalyses the reaction glutathione + H2O = L-cysteinylglycine + L-glutamate. It carries out the reaction an S-substituted glutathione + H2O = an S-substituted L-cysteinylglycine + L-glutamate. Its pathway is sulfur metabolism; glutathione metabolism. In Pseudomonas aeruginosa (strain ATCC 15692 / DSM 22644 / CIP 104116 / JCM 14847 / LMG 12228 / 1C / PRS 101 / PAO1), this protein is Glutathione hydrolase proenzyme (ggt).